Reading from the N-terminus, the 2035-residue chain is Envoplakin (2035 aa).

Residues 1 to 27 (MFKGLSKGSQGKGSPKGSPAKGSPKGS) are compositionally biased toward low complexity. Disordered regions lie at residues 1–37 (MFKG…AATQ) and 63–84 (KLQQ…QETG). The tract at residues 1–841 (MFKGLSKGSQ…LEPALAVSAP (841 aa)) is globular 1. The 4 X 4 AA tandem repeats of K-G-S-P stretch occupies residues 12–28 (KGSPKGSPAKGSPKGSP). Polar residues predominate over residues 71-84 (GEQNQALQHQQETG). The Spectrin repeat unit spans residues 229-330 (YTHLQGCTKQ…LCICQESQLQ (102 aa)). Residues 400-419 (QEVAPLPQRRNPSKQPLHVD) form a disordered region. The SH3 domain maps to 413-470 (KQPLHVDSICDWDSGEVQLLRGERYTLKDNADPYTWLVQGPGGETKSAPAACLCIPAP). A coiled-coil region spans residues 842–1664 (KRLRVISLQE…EKERTLRDLH (823 aa)). The central fibrous rod domain stretch occupies residues 842 to 1674 (KRLRVISLQE…TKVSREELNQ (833 aa)). The Plectin 1 repeat unit spans residues 1186–1227 (KQKPKVQLQERVSEIFQVLPETEQEIRRLRAQLQETGSKKSG). A Phosphoserine modification is found at serine 1576. Residues 1607–1631 (KQQKARQLQEEGRLLSQKTESERQK) show a composition bias toward basic and acidic residues. Positions 1607–1637 (KQQKARQLQEEGRLLSQKTESERQKAAQRSQ) are disordered. Residues 1675–2035 (ETQTRETNLS…SPTLPRSCVR (361 aa)) are globular 2. Residues 1679–1714 (RETNLSTKICILEPETGNDMSPYEAYKRGVIDRGQY) form a Plectin 2 repeat. Serine 1800 carries the post-translational modification Phosphoserine. Plectin repeat units lie at residues 1819 to 1856 (FGLT…PITG), 1857 to 1894 (QKLL…NTST), 1895 to 1932 (QRLL…QESV), 1933 to 1970 (LPHL…EDLG), and 1971 to 2008 (QLLQ…PLSG). Serine 2026 is modified (phosphoserine).

It belongs to the plakin or cytolinker family. May form a homodimer or a heterodimer with PPL.

The protein localises to the cell junction. It is found in the desmosome. Its subcellular location is the cornified envelope. It localises to the cytoplasm. The protein resides in the cytoskeleton. Its function is as follows. Component of the cornified envelope of keratinocytes. May link the cornified envelope to desmosomes and intermediate filaments. The protein is Envoplakin (Evpl) of Mus musculus (Mouse).